Reading from the N-terminus, the 1224-residue chain is Coatomer subunit alpha (1224 aa).

4 WD repeats span residues 3–38 (TKFETKSARVKGLSFHPKRPWILTSLHNGVIQLWDY), 42–80 (TLIDKFDEHDGPVRGIDFHKQQPLFVSGGDDYKIKVWNY), 84–122 (RCLFTLLGHLDYIRTTFFHHEYPWILSASDDQTIRVWNW), and 126–164 (TCVCVLTGHNHYVMCAQFHPTEDLVVSASLDQTVRVWDI). A Phosphoserine modification is found at S173. T185 is subject to Phosphothreonine. WD repeat units follow at residues 195–234 (AVVKHVLEGHDRGVNWAAFHPTMPLIVSGADDRQVKIWRM), 241–278 (EVDTCRGHYNNVSCAVFHPRQELILSNSEDKSIRVWDM), and 282–319 (TGVQTFRRDHDRFWVLAAHPNLNLFAAGHDGGMIVFKL). A Phosphoserine modification is found at S402. A Phosphothreonine modification is found at T591. At S895 the chain carries Phosphoserine. R965 is modified (omega-N-methylarginine). S1193 is modified (phosphoserine).

In terms of assembly, oligomeric complex that consists of at least the alpha, beta, beta', gamma, delta, epsilon and zeta subunits. Interacts with SCYL1. Interacts with JAGN1. Interacts with TMEM41B. Interacts with SVEP1. Probably interacts with PEX11A. As to expression, uniformly expressed in a wide range of adult and fetal tissues. Xenin is found in gastric, duodenal and jejunal mucosa. Circulates in the blood. Seems to be confined to specific endocrine cells.

Its subcellular location is the cytoplasm. It is found in the golgi apparatus membrane. The protein localises to the cytoplasmic vesicle. It localises to the COPI-coated vesicle membrane. The protein resides in the secreted. Its function is as follows. The coatomer is a cytosolic protein complex that binds to dilysine motifs and reversibly associates with Golgi non-clathrin-coated vesicles, which further mediate biosynthetic protein transport from the ER, via the Golgi up to the trans Golgi network. Coatomer complex is required for budding from Golgi membranes, and is essential for the retrograde Golgi-to-ER transport of dilysine-tagged proteins. In mammals, the coatomer can only be recruited by membranes associated to ADP-ribosylation factors (ARFs), which are small GTP-binding proteins; the complex also influences the Golgi structural integrity, as well as the processing, activity, and endocytic recycling of LDL receptors. Functionally, xenin stimulates exocrine pancreatic secretion. It inhibits pentagastrin-stimulated secretion of acid, to induce exocrine pancreatic secretion and to affect small and large intestinal motility. In the gut, xenin interacts with the neurotensin receptor. This chain is Coatomer subunit alpha (COPA), found in Homo sapiens (Human).